The chain runs to 610 residues: UvrABC system protein C (610 aa).

A GIY-YIG domain is found at 16–94 (SQPGVYRMYD…IKLYQPRYNV (79 aa)). Residues 204–239 (QQVLHQLIERMENASKALNFEEAARIRDQIQAVRRV) enclose the UVR domain.

This sequence belongs to the UvrC family. In terms of assembly, interacts with UvrB in an incision complex.

The protein resides in the cytoplasm. In terms of biological role, the UvrABC repair system catalyzes the recognition and processing of DNA lesions. UvrC both incises the 5' and 3' sides of the lesion. The N-terminal half is responsible for the 3' incision and the C-terminal half is responsible for the 5' incision. This Serratia proteamaculans (strain 568) protein is UvrABC system protein C.